The primary structure comprises 546 residues: (-)-5-epieremophilene synthase STPS1 (546 aa).

5 residues coordinate Mg(2+): Asp299, Asp303, Asp442, Thr446, and Glu450. The short motif at 299–303 (DDTYD) is the DDXXD motif element.

This sequence belongs to the terpene synthase family. Tpsa subfamily. As to quaternary structure, monomer. Mg(2+) serves as cofactor. In terms of tissue distribution, highly expressed in leaves and at lower levels in flowers.

The catalysed reaction is (2E,6E)-farnesyl diphosphate = (-)-5-epi-eremophilene + diphosphate. It participates in secondary metabolite biosynthesis; terpenoid biosynthesis. Sesquiterpene synthase that catalyzes the conversion of farnesyl diphosphate to (-)-5-epi-eremophilene. This is (-)-5-epieremophilene synthase STPS1 from Salvia miltiorrhiza (Chinese sage).